Here is a 243-residue protein sequence, read N- to C-terminus: Uridine-cytidine kinase B (243 aa).

Residue 22-29 (GGTASGKT) participates in ATP binding.

The protein belongs to the uridine kinase family.

It carries out the reaction uridine + ATP = UMP + ADP + H(+). The catalysed reaction is cytidine + ATP = CMP + ADP + H(+). It participates in pyrimidine metabolism; CTP biosynthesis via salvage pathway; CTP from cytidine: step 1/3. Its pathway is pyrimidine metabolism; UMP biosynthesis via salvage pathway; UMP from uridine: step 1/1. In terms of biological role, catalyzes the conversion of uridine into uridine monophosphate and cytidine into cytidine monophosphate in the pyrimidine salvage pathway. In Dictyostelium discoideum (Social amoeba), this protein is Uridine-cytidine kinase B (udkB).